Here is a 475-residue protein sequence, read N- to C-terminus: Ribulose bisphosphate carboxylase large chain (475 aa).

Positions 1–2 are excised as a propeptide; the sequence is MS. Proline 3 is modified (N-acetylproline). Residue lysine 14 is modified to N6,N6,N6-trimethyllysine. Positions 123 and 173 each coordinate substrate. The active-site Proton acceptor is lysine 175. Lysine 177 contributes to the substrate binding site. Mg(2+)-binding residues include lysine 201, aspartate 203, and glutamate 204. Lysine 201 is subject to N6-carboxylysine. The Proton acceptor role is filled by histidine 294. Arginine 295, histidine 327, and serine 379 together coordinate substrate.

The protein belongs to the RuBisCO large chain family. Type I subfamily. In terms of assembly, heterohexadecamer of 8 large chains and 8 small chains; disulfide-linked. The disulfide link is formed within the large subunit homodimers. It depends on Mg(2+) as a cofactor. In terms of processing, the disulfide bond which can form in the large chain dimeric partners within the hexadecamer appears to be associated with oxidative stress and protein turnover.

It is found in the plastid. It localises to the chloroplast. It catalyses the reaction 2 (2R)-3-phosphoglycerate + 2 H(+) = D-ribulose 1,5-bisphosphate + CO2 + H2O. It carries out the reaction D-ribulose 1,5-bisphosphate + O2 = 2-phosphoglycolate + (2R)-3-phosphoglycerate + 2 H(+). In terms of biological role, ruBisCO catalyzes two reactions: the carboxylation of D-ribulose 1,5-bisphosphate, the primary event in carbon dioxide fixation, as well as the oxidative fragmentation of the pentose substrate in the photorespiration process. Both reactions occur simultaneously and in competition at the same active site. The protein is Ribulose bisphosphate carboxylase large chain of Chloranthus spicatus (Chulantree).